Reading from the N-terminus, the 341-residue chain is Alpha-ketoglutarate-dependent dioxygenase oryG (341 aa).

A substrate-binding site is contributed by histidine 100. The Fe cation site is built by histidine 140 and aspartate 142. Threonine 167 is a binding site for 2-oxoglutarate. Residue histidine 299 participates in Fe cation binding. 2-oxoglutarate is bound by residues arginine 311 and arginine 315. A substrate-binding site is contributed by arginine 315.

It belongs to the TfdA dioxygenase family. The cofactor is Fe(2+).

The protein operates within secondary metabolite biosynthesis. Functionally, alpha-ketoglutarate-dependent dioxygenase; part of the gene cluster that mediates the biosynthesis of oryzines, natural products with an unusual maleidride backbone. The two subunits of the fungal fatty acid synthase oryfasA and oryfasB probably form octenoic acid. This fatty acid is most likely activated by the acyl-CoA ligase oryP to give octenyl-CoA before the citrate synthase-like protein oryE catalyzes condensation with oxaloacetate to form tricarboxylic acid. The next steps of the pathways are conjectural, but a favorite possible route has been proposed, beginning with decarboxylation and concomitant dehydration by the decarboxylase oryM, followed by tautomerization, which may lead to the production of a diene intermediate. Reduction of this diene intermediate could give the known metabolite piliformic acid. On the pathway to oryzine B and oryzine A, however, hydroxylation of the diene by the alpha-ketoglutarate-dependent dioxygenase oryG and lactonisation by the lactonohydrolases oryH or oryL could give oryzine B directly. Finally, enoyl reduction by the dehydrogenase oryD would then convert oryzine B into oryzine A. The polypeptide is Alpha-ketoglutarate-dependent dioxygenase oryG (Aspergillus oryzae (strain ATCC 42149 / RIB 40) (Yellow koji mold)).